Consider the following 270-residue polypeptide: Mevalonyl-coenzyme A hydratase sidH (270 aa).

The short motif at 268–270 is the PTS1-type peroxisomal targeting signal element; that stretch reads SKL.

The protein belongs to the enoyl-CoA hydratase/isomerase family.

Its subcellular location is the peroxisome. The protein operates within siderophore biosynthesis. Functionally, mevalonyl-coenzyme A hydratase; part of the siderophore biosynthetic pathway. Aspergillus fumigatus produces 4 types of siderophores, low-molecular-mass iron chelators, including excreted fusarinine C (FsC) and triacetylfusarinine C (TAFC) for iron uptake and intacellular ferricrocin (FC) for hyphal and hydroxyferricrocin (HFC) for conidial iron distribution and storage. TAFC consists of 3 N(2)-acetyl-N(5)-anhydromevalonyl-N(5)-hydroxyornithine residues cyclically linked by ester bonds; FC is a cyclic hexapeptide with the structure Gly-Ser-Gly-(N(5)-acetyl-N(5)-hydroxyornithine)x3. The biosynthesis of all four siderophores depends on the hydroxylation of ornithine, catalyzed by the monooxygenase sidA. Subsequently, the pathways for biosynthesis of extra- and intracellular siderophores split. For biosynthesis of extracellular siderophores, the transacylase sidF transfers anhydromevalonyl to N(5)-hydroxyornithine. The required anhydromevalonyl-CoA moiety is derived from mevalonate by CoA ligation and dehydration catalyzed by sidI and sidH respectively. The acetylation of N(5)-hydroxyornithine for FC biosynthesis involves the constitutively expressed sidL. FC is hydroxylated to HFC by an as yet uncharacterized enzyme during conidiation. Assembly of fusarinine C (FsC) and FC is catalyzed by two different nonribosomal peptide synthetases (NRPS), sidD and sidC respectively. Subsequently, sidG catalyzes N2-acetylation of FsC for forming TAFC. Both extra- and intracellular siderophores are crucial for growth during iron limitation and virulence. This Aspergillus fumigatus (strain ATCC MYA-4609 / CBS 101355 / FGSC A1100 / Af293) (Neosartorya fumigata) protein is Mevalonyl-coenzyme A hydratase sidH.